Reading from the N-terminus, the 552-residue chain is CTP synthase (552 aa).

The segment at Met1–Leu270 is amidoligase domain. Ser13 contacts CTP. Position 13 (Ser13) interacts with UTP. Residues Ser14–Ile19 and Asp71 each bind ATP. Residues Asp71 and Glu144 each contribute to the Mg(2+) site. CTP contacts are provided by residues Asp151–Glu153, Lys191–Gln196, and Lys227. UTP-binding positions include Lys191–Gln196 and Lys227. The 253-residue stretch at Thr295–Ala547 folds into the Glutamine amidotransferase type-1 domain. Gly356 contributes to the L-glutamine binding site. The active-site Nucleophile; for glutamine hydrolysis is the Cys383. L-glutamine contacts are provided by residues Leu384 to Gln387, Glu407, and Arg473. Residues His520 and Glu522 contribute to the active site.

Belongs to the CTP synthase family. In terms of assembly, homotetramer.

The enzyme catalyses UTP + L-glutamine + ATP + H2O = CTP + L-glutamate + ADP + phosphate + 2 H(+). The catalysed reaction is L-glutamine + H2O = L-glutamate + NH4(+). It catalyses the reaction UTP + NH4(+) + ATP = CTP + ADP + phosphate + 2 H(+). It functions in the pathway pyrimidine metabolism; CTP biosynthesis via de novo pathway; CTP from UDP: step 2/2. With respect to regulation, allosterically activated by GTP, when glutamine is the substrate; GTP has no effect on the reaction when ammonia is the substrate. The allosteric effector GTP functions by stabilizing the protein conformation that binds the tetrahedral intermediate(s) formed during glutamine hydrolysis. Inhibited by the product CTP, via allosteric rather than competitive inhibition. Catalyzes the ATP-dependent amination of UTP to CTP with either L-glutamine or ammonia as the source of nitrogen. Regulates intracellular CTP levels through interactions with the four ribonucleotide triphosphates. This is CTP synthase from Burkholderia cenocepacia (strain HI2424).